Consider the following 591-residue polypeptide: V-type ATP synthase alpha chain (591 aa).

An ATP-binding site is contributed by 242–249; sequence GPFGAGKT.

This sequence belongs to the ATPase alpha/beta chains family.

It carries out the reaction ATP + H2O + 4 H(+)(in) = ADP + phosphate + 5 H(+)(out). Functionally, produces ATP from ADP in the presence of a proton gradient across the membrane. The V-type alpha chain is a catalytic subunit. The sequence is that of V-type ATP synthase alpha chain from Chlamydia trachomatis serovar A (strain ATCC VR-571B / DSM 19440 / HAR-13).